The following is a 221-amino-acid chain: Endo-1,4-beta-xylanase 2 (221 aa).

An N-terminal signal peptide occupies residues 1–19; sequence MVAFTSLLAGFAAIAGVLS. The region spanning 32–221 is the GH11 domain; that stretch reads QTIGPGTGYS…SSGSASITVS (190 aa). 2 N-linked (GlcNAc...) asparagine glycosylation sites follow: Asn69 and Asn92. The active-site Nucleophile is Glu117. The Proton donor role is filled by Glu208.

It belongs to the glycosyl hydrolase 11 (cellulase G) family.

Its subcellular location is the secreted. The catalysed reaction is Endohydrolysis of (1-&gt;4)-beta-D-xylosidic linkages in xylans.. It functions in the pathway glycan degradation; xylan degradation. Endo-1,4-beta-xylanase involved in the hydrolysis of xylan, a major structural heterogeneous polysaccharide found in plant biomass representing the second most abundant polysaccharide in the biosphere, after cellulose. The protein is Endo-1,4-beta-xylanase 2 (Xyn2) of Trichoderma harzianum (Hypocrea lixii).